Reading from the N-terminus, the 129-residue chain is Virion-associated protein (129 aa).

2 coiled-coil regions span residues 1-31 (MANL…ILEL) and 38-59 (IKES…LIND). Residues 122-129 (PAGWPNQF) form a capsid binding region.

Belongs to the caulimovirus ORF III family. In terms of assembly, homotetramer, through coiled-coil domain. Homotrimer when bound on icosehadral capsid. Interacts with capsid protein, and with movement protein.

The protein resides in the virion. Its subcellular location is the host cell junction. The protein localises to the host plasmodesma. In terms of biological role, plays a role in virus cell-to-cell and plant-to-plant transmission. Interacts with virion icosahedral capsid and movement protein, thereby facilitating virion cell-to-cell transmission through plasmodesmata opened by viral movement protein. Also interacts with aphid transmission factor, attaching the virion to aphid stylet when the animal feeds on an virus infected plant. Aphid saliva may later detach the virion, inducing release of infectious particles when the animal feeds on a new plant. The polypeptide is Virion-associated protein (Cauliflower mosaic virus (strain Strasbourg) (CaMV)).